The chain runs to 85 residues: Toxin 3FTx-Lei1 (85 aa).

Residues 1–21 (MKTLLLSLVVVTFVCLDLAHT) form the signal peptide. Disulfide bonds link Cys-24–Cys-45, Cys-27–Cys-32, Cys-38–Cys-63, Cys-67–Cys-78, and Cys-79–Cys-84.

Belongs to the three-finger toxin family. Ancestral subfamily. Expressed by the venom gland.

It localises to the secreted. The sequence is that of Toxin 3FTx-Lei1 from Leioheterodon madagascariensis (Malagasy giant hognose snake).